A 1096-amino-acid chain; its full sequence is Phospholipase D zeta 1 (1096 aa).

The residue at position 2 (Ala-2) is an N-acetylalanine. The 155-residue stretch at 50–204 folds into the PX domain; it reads PKAVIVSVSR…REVCRFLEVS (155 aa). Residues 131–152 are disordered; the sequence is VQDEDADEVPLHQDESAKNRDV. The span at 139–151 shows a compositional bias: basic and acidic residues; it reads VPLHQDESAKNRD. The PH domain maps to 234-342; it reads DDSNRCCGCC…WVASINDAAL (109 aa). Residues 477-504 enclose the PLD phosphodiesterase 1 domain; that stretch reads YLWSHHEKLVIVDNQVCFIGGLDLCFGR. Active-site residues include His-482, Lys-484, and Asp-489. A compositionally biased stretch (basic and acidic residues) spans 607–632; the sequence is GRQEESDIESKKEEDSIRGIRRDDSF. The interval 607-691 is disordered; it reads GRQEESDIES…DGDTPMRGFV (85 aa). The PLD phosphodiesterase 2 domain maps to 892–919; it reads SQVYVHSKIMIVDDRAALIGSANINDRS. Catalysis depends on residues His-897, Lys-899, and Asp-904.

It belongs to the phospholipase D family. PXPH-PLD subfamily. Does not require Ca(2+) or any other cation for activity. serves as cofactor. As to expression, expressed in inflorescences, flowers, siliques, stems, leaves, and roots. Highest expression in roots.

It is found in the cytoplasmic vesicle. It catalyses the reaction a 1,2-diacyl-sn-glycero-3-phosphocholine + H2O = a 1,2-diacyl-sn-glycero-3-phosphate + choline + H(+). Its activity is regulated as follows. Calcium-independent and PIP2-dependent. Hydrolyzes glycerol-phospholipids at the terminal phosphodiesteric bond to generate phosphatidic acids (PA). Phosphatidylcholine-selective. Regulates root-hair morphogenesis. Contributes to the supply of inorganic phosphorus for cell metabolism and diacylglycerol moieties for galactolipid synthesis in phosphorus-starved roots. Involved in root elongation during phosphate limitation. The polypeptide is Phospholipase D zeta 1 (Arabidopsis thaliana (Mouse-ear cress)).